The chain runs to 388 residues: Ferrochelatase (388 aa).

2 residues coordinate Fe cation: His197 and Glu278.

This sequence belongs to the ferrochelatase family.

Its subcellular location is the cytoplasm. The catalysed reaction is heme b + 2 H(+) = protoporphyrin IX + Fe(2+). Its pathway is porphyrin-containing compound metabolism; protoheme biosynthesis; protoheme from protoporphyrin-IX: step 1/1. Its function is as follows. Catalyzes the ferrous insertion into protoporphyrin IX. The protein is Ferrochelatase of Thermosynechococcus vestitus (strain NIES-2133 / IAM M-273 / BP-1).